A 171-amino-acid polypeptide reads, in one-letter code: UPF0098 protein aq_1250 (171 aa).

The protein belongs to the UPF0098 family.

This chain is UPF0098 protein aq_1250, found in Aquifex aeolicus (strain VF5).